Consider the following 232-residue polypeptide: Ubiquinone biosynthesis O-methyltransferase (232 aa).

S-adenosyl-L-methionine is bound by residues arginine 36, glycine 55, aspartate 76, and leucine 120.

This sequence belongs to the methyltransferase superfamily. UbiG/COQ3 family.

The enzyme catalyses a 3-demethylubiquinol + S-adenosyl-L-methionine = a ubiquinol + S-adenosyl-L-homocysteine + H(+). It carries out the reaction a 3-(all-trans-polyprenyl)benzene-1,2-diol + S-adenosyl-L-methionine = a 2-methoxy-6-(all-trans-polyprenyl)phenol + S-adenosyl-L-homocysteine + H(+). It participates in cofactor biosynthesis; ubiquinone biosynthesis. Functionally, O-methyltransferase that catalyzes the 2 O-methylation steps in the ubiquinone biosynthetic pathway. The chain is Ubiquinone biosynthesis O-methyltransferase from Pseudomonas fluorescens (strain ATCC BAA-477 / NRRL B-23932 / Pf-5).